We begin with the raw amino-acid sequence, 117 residues long: MTSNKTAKIQFYEGTDEPVVPEIRLTRSKDGTTGQALFLFEKPQALSSITDGEITGMRMIDTEGEILTREVKVKFVDGEPIFLEAVYIWKNTPDFDRFMRFANSYAKSNGLGYSEKK.

It belongs to the Psb28 family. As to quaternary structure, part of the photosystem II complex.

Its subcellular location is the cellular thylakoid membrane. This chain is Photosystem II reaction center Psb28 protein, found in Prochlorococcus marinus (strain AS9601).